Reading from the N-terminus, the 158-residue chain is Cyclic pyranopterin monophosphate synthase (158 aa).

Substrate contacts are provided by residues 75 to 77 (LCH) and 111 to 112 (ME). The active site involves Asp126.

It belongs to the MoaC family. As to quaternary structure, homohexamer; trimer of dimers.

The catalysed reaction is (8S)-3',8-cyclo-7,8-dihydroguanosine 5'-triphosphate = cyclic pyranopterin phosphate + diphosphate. Its pathway is cofactor biosynthesis; molybdopterin biosynthesis. Functionally, catalyzes the conversion of (8S)-3',8-cyclo-7,8-dihydroguanosine 5'-triphosphate to cyclic pyranopterin monophosphate (cPMP). This Caulobacter vibrioides (strain ATCC 19089 / CIP 103742 / CB 15) (Caulobacter crescentus) protein is Cyclic pyranopterin monophosphate synthase.